The following is a 560-amino-acid chain: Cytosolic purine 5'-nucleotidase (560 aa).

Catalysis depends on Asp-52, which acts as the Nucleophile. Asp-52 and Asp-54 together coordinate IMP. Mg(2+)-binding residues include Asp-52 and Asp-54. Asp-54 serves as the catalytic Proton donor. The ATP site is built by Arg-144 and Asn-154. Residues Arg-202, Asp-206, Lys-215, Thr-249, Asn-250, Ser-251, and Lys-292 each contribute to the IMP site. Asp-351 is a Mg(2+) binding site. The residue at position 418 (Ser-418) is a Phosphoserine. ATP-binding residues include Gln-453 and Arg-456. Phosphoserine occurs at positions 502, 511, and 527. Positions 541–560 (PQEITHCHDEDDDEEEEEEE) are disordered. A required for tetramer assembly region spans residues 548–560 (HDEDDDEEEEEEE). Over residues 550–560 (EDDDEEEEEEE) the composition is skewed to acidic residues.

It belongs to the 5'(3')-deoxyribonucleotidase family. Homotetramer. Mg(2+) is required as a cofactor.

It localises to the cytoplasm. It is found in the cytosol. The catalysed reaction is a ribonucleoside 5'-phosphate + H2O = a ribonucleoside + phosphate. It carries out the reaction a 2'-deoxyribonucleoside + a ribonucleoside 5'-phosphate = a ribonucleoside + a 2'-deoxyribonucleoside 5'-phosphate. It catalyses the reaction IMP + H2O = inosine + phosphate. The enzyme catalyses GMP + H2O = guanosine + phosphate. The catalysed reaction is dIMP + H2O = 2'-deoxyinosine + phosphate. It carries out the reaction dGMP + H2O = 2'-deoxyguanosine + phosphate. It catalyses the reaction XMP + H2O = xanthosine + phosphate. The enzyme catalyses inosine + GMP = guanosine + IMP. The catalysed reaction is dGMP + inosine = 2'-deoxyguanosine + IMP. It carries out the reaction dIMP + inosine = 2'-deoxyinosine + IMP. It catalyses the reaction inosine + UMP = uridine + IMP. The enzyme catalyses inosine + CMP = cytidine + IMP. The catalysed reaction is inosine + AMP = IMP + adenosine. Allosterically activated by various compounds including ATP, 2,3-BPG/2,3-Bisphosphoglyceric acid and Ap4A/P1,P4-bis(5'-adenosyl) tetraphosphate. Binding of an allosteric activator is a prerequisiste to magnesium and substrate binding. Inhibited by inorganic phosphate. In terms of biological role, broad specificity cytosolic 5'-nucleotidase that catalyzes the dephosphorylation of 6-hydroxypurine nucleoside 5'-monophosphates. In addition, possesses a phosphotransferase activity by which it can transfer a phosphate from a donor nucleoside monophosphate to an acceptor nucleoside, preferably inosine, deoxyinosine and guanosine. Has the highest activities for IMP and GMP followed by dIMP, dGMP and XMP. Could also catalyze the transfer of phosphates from pyrimidine monophosphates but with lower efficiency. Through these activities regulates the purine nucleoside/nucleotide pools within the cell. The protein is Cytosolic purine 5'-nucleotidase of Bos taurus (Bovine).